The sequence spans 648 residues: Threonine--tRNA ligase (648 aa).

The region spanning 1–63 (MSQISLTFPD…AASGRIAINT (63 aa)) is the TGS domain. The tract at residues 247–544 (DHRKLGREME…LIENYSGKLP (298 aa)) is catalytic. Positions 344, 395, and 521 each coordinate Zn(2+).

The protein belongs to the class-II aminoacyl-tRNA synthetase family. As to quaternary structure, homodimer. Requires Zn(2+) as cofactor.

The protein localises to the cytoplasm. It carries out the reaction tRNA(Thr) + L-threonine + ATP = L-threonyl-tRNA(Thr) + AMP + diphosphate + H(+). In terms of biological role, catalyzes the attachment of threonine to tRNA(Thr) in a two-step reaction: L-threonine is first activated by ATP to form Thr-AMP and then transferred to the acceptor end of tRNA(Thr). Also edits incorrectly charged L-seryl-tRNA(Thr). The chain is Threonine--tRNA ligase from Paracoccus denitrificans (strain Pd 1222).